Reading from the N-terminus, the 144-residue chain is tRNA-specific adenosine deaminase (144 aa).

The CMP/dCMP-type deaminase domain occupies 1-116 (MEQALKQAGI…SNLRYFNSSV (116 aa)). Histidine 48 is a Zn(2+) binding site. Residue glutamate 50 is the Proton donor of the active site. Residues cysteine 78 and cysteine 81 each contribute to the Zn(2+) site.

The protein belongs to the cytidine and deoxycytidylate deaminase family. In terms of assembly, homodimer. It depends on Zn(2+) as a cofactor.

It catalyses the reaction adenosine(34) in tRNA + H2O + H(+) = inosine(34) in tRNA + NH4(+). Its function is as follows. Catalyzes the deamination of adenosine to inosine at the wobble position 34 of tRNA(Arg2). This Rickettsia felis (strain ATCC VR-1525 / URRWXCal2) (Rickettsia azadi) protein is tRNA-specific adenosine deaminase.